The primary structure comprises 350 residues: Heat-inducible transcription repressor HrcA (350 aa).

The protein belongs to the HrcA family.

Its function is as follows. Negative regulator of class I heat shock genes (grpE-dnaK-dnaJ and groELS operons). Prevents heat-shock induction of these operons. The polypeptide is Heat-inducible transcription repressor HrcA (Xanthomonas campestris pv. campestris (strain ATCC 33913 / DSM 3586 / NCPPB 528 / LMG 568 / P 25)).